Here is a 208-residue protein sequence, read N- to C-terminus: Ribosomal RNA small subunit methyltransferase G (208 aa).

Residues glycine 77, leucine 82, 128–129 (VE), and arginine 142 contribute to the S-adenosyl-L-methionine site.

Belongs to the methyltransferase superfamily. RNA methyltransferase RsmG family.

The protein localises to the cytoplasm. The catalysed reaction is guanosine(527) in 16S rRNA + S-adenosyl-L-methionine = N(7)-methylguanosine(527) in 16S rRNA + S-adenosyl-L-homocysteine. Functionally, specifically methylates the N7 position of guanine in position 527 of 16S rRNA. This chain is Ribosomal RNA small subunit methyltransferase G, found in Chromohalobacter salexigens (strain ATCC BAA-138 / DSM 3043 / CIP 106854 / NCIMB 13768 / 1H11).